A 280-amino-acid polypeptide reads, in one-letter code: Tryptophan 2,3-dioxygenase (280 aa).

Substrate-binding positions include 47 to 51 (FVVQH), Tyr-109, and Arg-113. His-236 is a binding site for heme. Thr-250 contributes to the substrate binding site.

It belongs to the tryptophan 2,3-dioxygenase family. In terms of assembly, homotetramer. Heme serves as cofactor.

The enzyme catalyses L-tryptophan + O2 = N-formyl-L-kynurenine. The protein operates within amino-acid degradation; L-tryptophan degradation via kynurenine pathway; L-kynurenine from L-tryptophan: step 1/2. Its function is as follows. Heme-dependent dioxygenase that catalyzes the oxidative cleavage of the L-tryptophan (L-Trp) pyrrole ring and converts L-tryptophan to N-formyl-L-kynurenine. Catalyzes the oxidative cleavage of the indole moiety. The protein is Tryptophan 2,3-dioxygenase of Serratia proteamaculans (strain 568).